Reading from the N-terminus, the 454-residue chain is Kynurenine--oxoglutarate transaminase 3 (454 aa).

An N-acetylserine modification is found at F2. A substrate-binding site is contributed by G71. The residue at position 116 (K116) is an N6-acetyllysine; alternate. K116 bears the N6-succinyllysine; alternate mark. N218 contacts substrate. An N6-(pyridoxal phosphate)lysine modification is found at K280. R429 is a binding site for substrate.

This sequence belongs to the class-I pyridoxal-phosphate-dependent aminotransferase family. As to quaternary structure, homodimer. Pyridoxal 5'-phosphate is required as a cofactor.

It carries out the reaction L-kynurenine + 2-oxoglutarate = kynurenate + L-glutamate + H2O. The enzyme catalyses L-kynurenine + glyoxylate = kynurenate + glycine + H2O. The catalysed reaction is 3-hydroxy-L-kynurenine + glyoxylate = xanthurenate + glycine + H2O. It catalyses the reaction an S-substituted L-cysteine + H2O = a thiol + pyruvate + NH4(+). It functions in the pathway amino-acid degradation; L-kynurenine degradation; kynurenate from L-kynurenine: step 1/2. Functionally, catalyzes the irreversible transamination of the L-tryptophan metabolite L-kynurenine to form kynurenic acid (KA), an intermediate in the tryptophan catabolic pathway which is also a broad spectrum antagonist of the three ionotropic excitatory amino acid receptors among others. May catalyze the beta-elimination of S-conjugates and Se-conjugates of L-(seleno)cysteine, resulting in the cleavage of the C-S or C-Se bond. Has transaminase activity towards L-kynurenine, tryptophan, phenylalanine, serine, cysteine, methionine, histidine, glutamine and asparagine with glyoxylate as an amino group acceptor (in vitro). Has lower activity with 2-oxoglutarate as amino group acceptor (in vitro). The sequence is that of Kynurenine--oxoglutarate transaminase 3 from Homo sapiens (Human).